The chain runs to 502 residues: DnaJ homolog subfamily C member 3 homolog (502 aa).

A signal peptide spans 1–25 (MIVNKKYFLLICIIILISINCLVLA). TPR repeat units lie at residues 29–62 (IENF…IGSD), 69–102 (VSLL…NPDN), 103–136 (IHAR…RPDN), 184–217 (KEVR…EPSS), 218–251 (VAAL…DPDN), 264–297 (FEKS…EPNS), 302–335 (TPLY…DELN), and 336–369 (ADAL…KPND). Residue N51 is glycosylated (N-linked (GlcNAc...) asparagine). C309 and C325 are disulfide-bonded. The 68-residue stretch at 390–457 (DYYKILGIQK…EKRKRYDMGE (68 aa)) folds into the J domain.

It is found in the secreted. Its subcellular location is the endoplasmic reticulum lumen. May be involved in the unfolded protein response (UPR) during ER stress. The chain is DnaJ homolog subfamily C member 3 homolog (dnajc3) from Dictyostelium discoideum (Social amoeba).